The following is a 1022-amino-acid chain: MLKLKGELRTAKGLKNEAGERDRDVSNLNSKLLSLQLDIKNLHDVCKRQGKTLQENQLCVEEAMLKANHNKKQAQTLVFTDNQMDFRVNKQYHLRQLQQLKKKLLTLQQELEFRTQELQASYCSLLQYQSILEKQTSDLLVLHRHCKLKEDEVILYEEEMGNHSKSTGEKLHLAQEQLALAGDKILSLERSLNLYRDKYQTSLSNIELLECQVKMLEGELSGLIGQDPENKGDHPKVRIYTSPCVIQEHQETLKRLSEVWQKVSEQDDLIQELRNKLACSNSLVLEREEALIKLQAEFASYTATHRHPPTSSEDCEDITKILKHLQEQKDSQCLHVEEYQNLVKDLRMELEAVSEQKKKIMKDMMKLELDLHGLREETSCVIEKKDKETVFLQYRLQDLQQQYTESQKLSLKKDKLLQDKDERLHELEKNLMQVQNSLREKEAELEKLQCTTKELDTSLQEARQSTSKIDCEALRAEIQKLKDSLEEAREQLKVSDQNLTQSKEEAHLSASSLEDAHRKIENCLLQDKQKEEVIKDLQSQLHKLQKESSKIEEERKHNRQRLQELSSELSEGQRRLSNAEKEKSLLQKTLDEDEKKIDELFHSTQVSEQKQRELTNSIRKLEEELLEIKGLLEEKREQLKKSKEQEKALEEEIEALRQEAKRKEKMAKEHLRKLDEEKENLQAELTSRSSHLDSSLNKYNSSQKVIQELNAEIARQKDSIMILQTQLDSAIQKEKNCFQNMVSKEAYEELVRKSGNCQDDLTQALEKLTQATSETKSLNRSLQQTQERKAQLEDEIAAYEERMKKLNMELKKLQGFQQQSEQEVHNFDKKLEEMSNQVLQWQRQHQSDLKMLAAKESQLREFQEEMATLRESLLADEKEPYSPPAKLTPKETCRHHRENDQIMNNVEQWAKEQKIANEKLGNKLREQVKYIAKLTGEKDHLHNVMVHLQQENKKLKNEIEEKKLKAGNPRICVKAFPPNKLEPSQKGKLCCALGWRGIPQDLTPKTDHKYMGLPHSSGSSYC.

Coiled-coil stretches lie at residues 89-121 (NKQY…LQAS), 169-281 (EKLH…ACSN), 312-377 (SEDC…LREE), 411-732 (LKKD…SAIQ), and 758-968 (QDDL…KAGN). Basic and acidic residues-rich tracts occupy residues 545-556 (QKESSKIEEERK) and 571-582 (EGQRRLSNAEKE). The segment at 545-582 (QKESSKIEEERKHNRQRLQELSSELSEGQRRLSNAEKE) is disordered.

As to expression, expressed in the testis.

Its subcellular location is the cell projection. It is found in the cilium. The protein resides in the flagellum. Functionally, required for normal spermatogenesis. It functions as a scaffold protein that attaches the sperm head-tail connecting piece to the nuclear envelope, thus maintaining sperm head and tail integrity. May also be involved in the general organization of cellular cytoskeleton. This Mus musculus (Mouse) protein is Polyamine-modulated factor 1-binding protein 1 (Pmfbp1).